The primary structure comprises 201 residues: Histone chaperone asf1a-A (201 aa).

Belongs to the ASF1 family. Interacts with histone H3 (including both histone H3.1 and H3.3) and histone H4. Interacts with hira and p60.

The protein localises to the nucleus. In terms of biological role, histone chaperone that facilitates histone deposition and histone exchange and removal during nucleosome assembly and disassembly. Not critical for histone deposition during nucleosome assembly. The chain is Histone chaperone asf1a-A (asf1aa) from Xenopus laevis (African clawed frog).